Here is a 123-residue protein sequence, read N- to C-terminus: Large ribosomal subunit protein bL17 (123 aa).

This sequence belongs to the bacterial ribosomal protein bL17 family. Part of the 50S ribosomal subunit. Contacts protein L32.

The chain is Large ribosomal subunit protein bL17 from Borreliella burgdorferi (strain ZS7) (Borrelia burgdorferi).